The chain runs to 387 residues: MNHGTKIPVDPFRIIKETARDGSTGEVKQLSYTSSKVVGSGSFGVVMQVHLIESDSKAAIKRVLQDKRFKNRELQIMRIMKHPNIVDLIAYYYTTGDNSDEVYLNLVLEFMPETIYRASRLYTRQKLSMPMLEVKLYIYQLLRSLAYIHASGICHRDIKPQNLLLDPENGILKLCDFGSAKILVAGEPNVSYICSRYYRAPELIFGATDYTHAIDIWSTGCVMAELMLGHPLFPGESGIDQLVEIIKILGTPSREQIKTMNPNYMEHRFPQIRPQPLSRVFSRSVPLDALDLLSKMLQYTPTDRLTAAEAMCHPFFDELRDPNTKLHNSRNPDASPRHLPELFNFSPFELSIRPDLNQKLIPSHARDALPVKLDDFVPIPIHRARID.

A Protein kinase domain is found at 32–316; it reads YTSSKVVGSG…AAEAMCHPFF (285 aa). ATP is bound by residues 38–46 and Lys61; that span reads VGSGSFGVV. Asp157 functions as the Proton acceptor in the catalytic mechanism. Position 191 is a phosphoserine (Ser191). Tyr192 is modified (phosphotyrosine; by autocatalysis). Residue Ser335 is modified to Phosphoserine.

It belongs to the protein kinase superfamily. CMGC Ser/Thr protein kinase family. GSK-3 subfamily. Post-translationally, autophosphorylated on tyrosine residues.

It is found in the cytoplasm. The protein localises to the nucleus. The catalysed reaction is L-seryl-[protein] + ATP = O-phospho-L-seryl-[protein] + ADP + H(+). It catalyses the reaction L-threonyl-[protein] + ATP = O-phospho-L-threonyl-[protein] + ADP + H(+). Functionally, interacts with cdc14 which is thought to play a role in the initiation and completion of mitosis. Involved in the positive regulation of mis12. This chain is Protein kinase gsk3 (gsk3), found in Schizosaccharomyces pombe (strain 972 / ATCC 24843) (Fission yeast).